A 218-amino-acid chain; its full sequence is Cytidylate kinase (218 aa).

Residue 7 to 15 coordinates ATP; the sequence is GPSASGKSS.

This sequence belongs to the cytidylate kinase family. Type 1 subfamily.

Its subcellular location is the cytoplasm. It catalyses the reaction CMP + ATP = CDP + ADP. The catalysed reaction is dCMP + ATP = dCDP + ADP. The chain is Cytidylate kinase from Borrelia duttonii (strain Ly).